The following is a 219-amino-acid chain: RNA-3 uncharacterized 24.7 kDa protein (219 aa).

The chain is RNA-3 uncharacterized 24.7 kDa protein from Beta macrocarpa (Beet).